A 359-amino-acid polypeptide reads, in one-letter code: MILNSSTEDGIKRIQDDCPKAGRHNYIFVMIPTLYSIIFVVGIFGNSLVVIVIYFYMKLKTVASVFLLNLALADLCFLLTLPLWAVYTAMEYRWPFGNYLCKIASASVSFNLYASVFLLTCLSIDRYVAIVHPMKSPVRRTMLMAKVTCIIIWLLAGLASLPTIIHRNVFFIENTNITVCAFHYESQNSTLPIGLGLTKNILGFLFPFLIILTSYTLIWKTLKRAYEIQKNKPRNDDIFKIIMAIVLFFFFSWVPHQIFTFLDVLIQLGIIHDCKIADIVDTAMPITICIAYFNNCLNPLFYGFLGKKFKKYFLQLLKYIPPKAKSHSSLSTKMSTLSYRPSDHGNASTKKSASCVEVE.

At 1–25 the chain is on the extracellular side; it reads MILNSSTEDGIKRIQDDCPKAGRHN. Residue asparagine 4 is glycosylated (N-linked (GlcNAc...) asparagine). Positions 15 and 17 each coordinate angiotensin II. Disulfide bonds link cysteine 18–cysteine 274 and cysteine 101–cysteine 180. The helical transmembrane segment at 26-55 threads the bilayer; the sequence is YIFVMIPTLYSIIFVVGIFGNSLVVIVIYF. The Cytoplasmic segment spans residues 56–61; that stretch reads YMKLKT. Residues 62–89 traverse the membrane as a helical segment; the sequence is VASVFLLNLALADLCFLLTLPLWAVYTA. Topologically, residues 90 to 98 are extracellular; that stretch reads MEYRWPFGN. A helical transmembrane segment spans residues 99–125; that stretch reads YLCKIASASVSFNLYASVFLLTCLSID. At 126-141 the chain is on the cytoplasmic side; it reads RYVAIVHPMKSPVRRT. Residues 142–165 form a helical membrane-spanning segment; sequence MLMAKVTCIIIWLLAGLASLPTII. Residues 166-190 are Extracellular-facing; it reads HRNVFFIENTNITVCAFHYESQNST. Arginine 167 is an angiotensin II binding site. Asparagine 176 is a glycosylation site (N-linked (GlcNAc...) asparagine). Angiotensin II contacts are provided by phenylalanine 182, histidine 183, and tyrosine 184. N-linked (GlcNAc...) asparagine glycosylation is present at asparagine 188. Residues 191-216 traverse the membrane as a helical segment; the sequence is LPIGLGLTKNILGFLFPFLIILTSYT. Lysine 199 is an angiotensin II binding site. Over 217-239 the chain is Cytoplasmic; it reads LIWKTLKRAYEIQKNKPRNDDIF. Residues 240-268 traverse the membrane as a helical segment; it reads KIIMAIVLFFFFSWVPHQIFTFLDVLIQL. The Extracellular segment spans residues 269-278; that stretch reads GIIHDCKIAD. The helical transmembrane segment at 279 to 304 threads the bilayer; sequence IVDTAMPITICIAYFNNCLNPLFYGF. At 305–359 the chain is on the cytoplasmic side; sequence LGKKFKKYFLQLLKYIPPKAKSHSSLSTKMSTLSYRPSDHGNASTKKSASCVEVE. Over residues 335–352 the composition is skewed to polar residues; it reads STLSYRPSDHGNASTKKS. Positions 335-359 are disordered; it reads STLSYRPSDHGNASTKKSASCVEVE. Residue cysteine 355 is the site of S-palmitoyl cysteine attachment.

The protein belongs to the G-protein coupled receptor 1 family. As to quaternary structure, interacts with MAS1. Interacts with ARRB1. Interacts with FLNA (via filamin repeat 21); increases PKA-mediated phosphorylation of FLNA. In terms of processing, C-terminal Ser or Thr residues may be phosphorylated. As to expression, adrenal, liver, aorta, kidney, lung, testis and heart.

Its subcellular location is the cell membrane. Functionally, receptor for angiotensin II, a vasoconstricting peptide, which acts as a key regulator of blood pressure and sodium retention by the kidney. The activated receptor in turn couples to G-alpha proteins G(q) (GNAQ, GNA11, GNA14 or GNA15) and thus activates phospholipase C and increases the cytosolic Ca(2+) concentrations, which in turn triggers cellular responses such as stimulation of protein kinase C. The polypeptide is Type-1 angiotensin II receptor (AGTR1) (Canis lupus familiaris (Dog)).